Consider the following 142-residue polypeptide: Taurine up-regulated 1 protein (142 aa).

The first 40 residues, 1–40 (MARPPPLPGLVGRRSGRAVDRAIGWRLFLLLWHPALGAQA), serve as a signal peptide directing secretion. Over 41–123 (RPPRRAPGGR…ARTQLEGQEG (83 aa)) the chain is Extracellular. Residues 124 to 140 (AGGWLVVGFLLCLFLLM) form a helical membrane-spanning segment. At 141-142 (PP) the chain is on the cytoplasmic side.

In terms of tissue distribution, widely expressed in the adult with highest levels in placenta and testis. Also expressed in a number of embryonic tissues at multiple embryonic stages.

The protein localises to the nucleus membrane. It localises to the mitochondrion membrane. Its subcellular location is the cytoplasm. This chain is Taurine up-regulated 1 protein, found in Mus musculus (Mouse).